The primary structure comprises 231 residues: MLRGTPGLGLGGLNRAEDFVEDLGRSCSEAGRNFGVLRRSSLDEAEEAAGRKRERPTRSKARRMAANVRERKRILDYNEAFNALRRALQHDLGGKRLSKIATLRRAIHRITALSLVLRASPAPRWPCGHLECHGQAAQGSSTGNSSFSVPRSAPSPIAPSLTRRDIASPLVPPTPRCASCSPHSHLGRPRVMAEVPNLAQTSGGNWRQCPGAPPVRPVSWRWGSGLGYQHS.

Residues 61 to 113 enclose the bHLH domain; sequence ARRMAANVRERKRILDYNEAFNALRRALQHDLGGKRLSKIATLRRAIHRITAL. Positions 135 to 168 are disordered; that stretch reads QAAQGSSTGNSSFSVPRSAPSPIAPSLTRRDIAS. Positions 137-149 are enriched in polar residues; that stretch reads AQGSSTGNSSFSV.

Heterodimer. Efficient DNA binding requires dimerization with another bHLH protein. Interacts with TCF3, TCF4, and TCF12.

Its subcellular location is the nucleus. Its function is as follows. Transcription factor, which play a role in limb development. Is an essential player in the regulatory network governing transcription of genes implicated in limb morphogenesis. The chain is Class A basic helix-loop-helix protein 9 (Bhlha9) from Mus musculus (Mouse).